We begin with the raw amino-acid sequence, 641 residues long: Threonine--tRNA ligase (641 aa).

The region spanning 1-61 (MPAITLPDGS…DDDVQLEIVT (61 aa)) is the TGS domain. The catalytic stretch occupies residues 242-533 (DHRRIGRAQN…LIEHYAGALP (292 aa)). Residues C333, H384, and H510 each coordinate Zn(2+).

Belongs to the class-II aminoacyl-tRNA synthetase family. In terms of assembly, homodimer. It depends on Zn(2+) as a cofactor.

The protein resides in the cytoplasm. The catalysed reaction is tRNA(Thr) + L-threonine + ATP = L-threonyl-tRNA(Thr) + AMP + diphosphate + H(+). Functionally, catalyzes the attachment of threonine to tRNA(Thr) in a two-step reaction: L-threonine is first activated by ATP to form Thr-AMP and then transferred to the acceptor end of tRNA(Thr). Also edits incorrectly charged L-seryl-tRNA(Thr). This is Threonine--tRNA ligase from Alkalilimnicola ehrlichii (strain ATCC BAA-1101 / DSM 17681 / MLHE-1).